The primary structure comprises 696 residues: UvrABC system protein C (696 aa).

One can recognise a GIY-YIG domain in the interval 16–95 (TEPGVYKFRD…IKRFDPRFNV (80 aa)). The region spanning 208-243 (DKVTRKLNADMMAAAEELDFERAARLRDDLEAIDKV) is the UVR domain.

It belongs to the UvrC family. In terms of assembly, interacts with UvrB in an incision complex.

Its subcellular location is the cytoplasm. Its function is as follows. The UvrABC repair system catalyzes the recognition and processing of DNA lesions. UvrC both incises the 5' and 3' sides of the lesion. The N-terminal half is responsible for the 3' incision and the C-terminal half is responsible for the 5' incision. In Corynebacterium glutamicum (strain ATCC 13032 / DSM 20300 / JCM 1318 / BCRC 11384 / CCUG 27702 / LMG 3730 / NBRC 12168 / NCIMB 10025 / NRRL B-2784 / 534), this protein is UvrABC system protein C.